A 177-amino-acid chain; its full sequence is Large ribosomal subunit protein uL6 (177 aa).

It belongs to the universal ribosomal protein uL6 family. Part of the 50S ribosomal subunit.

Its function is as follows. This protein binds to the 23S rRNA, and is important in its secondary structure. It is located near the subunit interface in the base of the L7/L12 stalk, and near the tRNA binding site of the peptidyltransferase center. This Rickettsia bellii (strain OSU 85-389) protein is Large ribosomal subunit protein uL6.